Here is a 329-residue protein sequence, read N- to C-terminus: Protein RecA (329 aa).

63–70 (GNESSGKT) provides a ligand contact to ATP.

This sequence belongs to the RecA family.

The protein resides in the cytoplasm. Functionally, can catalyze the hydrolysis of ATP in the presence of single-stranded DNA, the ATP-dependent uptake of single-stranded DNA by duplex DNA, and the ATP-dependent hybridization of homologous single-stranded DNAs. It interacts with LexA causing its activation and leading to its autocatalytic cleavage. The chain is Protein RecA from Malacoplasma penetrans (strain HF-2) (Mycoplasma penetrans).